Reading from the N-terminus, the 150-residue chain is Cdc42 effector protein 5 (150 aa).

Disordered stretches follow at residues 1–20 (MPVM…DRGA), 34–89 (LHVG…PADP), and 114–133 (SETT…QHPK). In terms of domain architecture, CRIB spans 23–37 (ISAPLGDFRHTLHVG). Omega-N-methylarginine is present on arginine 38. 2 stretches are compositionally biased toward pro residues: residues 55–66 (GPPPEPGAPPVV) and 74–87 (PAAP…PSPA). Basic and acidic residues predominate over residues 114 to 127 (SETTATKPDGDAHP).

Belongs to the BORG/CEP family. As to quaternary structure, interacts with CDC42 in a GTP-dependent manner, and with SEPT7. In terms of tissue distribution, highly expressed in the skeletal muscle.

It localises to the endomembrane system. It is found in the cytoplasm. Its subcellular location is the cytoskeleton. Functionally, probably involved in the organization of the actin cytoskeleton. May act downstream of CDC42 to induce actin filament assembly leading to cell shape changes. Induces pseudopodia formation in fibroblasts. Inhibits MAPK8 independently of CDC42 binding. Controls septin organization and this effect is negatively regulated by CDC42. This Mus musculus (Mouse) protein is Cdc42 effector protein 5 (Cdc42ep5).